The primary structure comprises 280 residues: Rhomboid-like protein 11, chloroplastic (280 aa).

The transit peptide at 1–57 directs the protein to the chloroplast; the sequence is MSQLLHLHRLSLPQSSLRFRFPPLHRRRAASSPTNSTQPPLQFRPLTVSRSQITCRF. The Stromal portion of the chain corresponds to 58–82; it reads SQSDITPQFELDKAKDNRKPQKRAN. Residues 83–103 traverse the membrane as a helical segment; the sequence is GIFWIILINLGIYLADHFFQV. Residues 104–117 are Chloroplast intermembrane-facing; it reads RGIKSLYLYHNFPA. Residues 118–140 form a helical membrane-spanning segment; that stretch reads WYQFVTATFCHANWNHLSSNLFF. Topologically, residues 141–154 are stromal; the sequence is LYIFGKLVEEEEGN. Residues 155 to 175 form a helical membrane-spanning segment; it reads FGLWLSYLFTGVGANLVSWLV. Residues 176 to 178 lie on the Chloroplast intermembrane side of the membrane; the sequence is LPR. The helical transmembrane segment at 179–199 threads the bilayer; that stretch reads NAVSVGASGAVFGLFAISVLV. The active-site Nucleophile is Ser-186. Over 200-243 the chain is Stromal; it reads KMSWDWRKILEVLILGQFVIERVMEAAQASAGLSGTIYGGYSLQ. The helical transmembrane segment at 244–264 threads the bilayer; sequence TVNHIAHLSGALVGVVLVWLL. Catalysis depends on His-250, which acts as the Charge relay system. The Chloroplast intermembrane segment spans residues 265–280; it reads SKFPSASMDQDVKKSS.

It belongs to the peptidase S54 family. Homooligomer.

It is found in the plastid. The protein localises to the chloroplast inner membrane. Rhomboid-type serine protease that catalyzes intramembrane proteolysis. May be involved in TIC22 processing during its import. The polypeptide is Rhomboid-like protein 11, chloroplastic (Arabidopsis thaliana (Mouse-ear cress)).